Reading from the N-terminus, the 305-residue chain is N-acetylmuramic acid 6-phosphate etherase (305 aa).

In terms of domain architecture, SIS spans 61–224 (ISDALAKGGR…STGAMVKLGK (164 aa)). Catalysis depends on Glu-89, which acts as the Proton donor. Glu-120 is an active-site residue.

Belongs to the GCKR-like family. MurNAc-6-P etherase subfamily. In terms of assembly, homodimer.

The catalysed reaction is N-acetyl-D-muramate 6-phosphate + H2O = N-acetyl-D-glucosamine 6-phosphate + (R)-lactate. The protein operates within amino-sugar metabolism; N-acetylmuramate degradation. In terms of biological role, specifically catalyzes the cleavage of the D-lactyl ether substituent of MurNAc 6-phosphate, producing GlcNAc 6-phosphate and D-lactate. This is N-acetylmuramic acid 6-phosphate etherase from Synechocystis sp. (strain ATCC 27184 / PCC 6803 / Kazusa).